Here is a 1101-residue protein sequence, read N- to C-terminus: MRGRICFLAIVILCSFSFILVRSLNEEGRVLLEFKAFLNDSNGYLASWNQLDSNPCNWTGIACTHLRTVTSVDLNGMNLSGTLSPLICKLHGLRKLNVSTNFISGPIPQDLSLCRSLEVLDLCTNRFHGVIPIQLTMIITLKKLYLCENYLFGSIPRQIGNLSSLQELVIYSNNLTGVIPPSMAKLRQLRIIRAGRNGFSGVIPSEISGCESLKVLGLAENLLEGSLPKQLEKLQNLTDLILWQNRLSGEIPPSVGNISRLEVLALHENYFTGSIPREIGKLTKMKRLYLYTNQLTGEIPREIGNLIDAAEIDFSENQLTGFIPKEFGHILNLKLLHLFENILLGPIPRELGELTLLEKLDLSINRLNGTIPQELQFLPYLVDLQLFDNQLEGKIPPLIGFYSNFSVLDMSANSLSGPIPAHFCRFQTLILLSLGSNKLSGNIPRDLKTCKSLTKLMLGDNQLTGSLPIELFNLQNLTALELHQNWLSGNISADLGKLKNLERLRLANNNFTGEIPPEIGNLTKIVGFNISSNQLTGHIPKELGSCVTIQRLDLSGNKFSGYIAQELGQLVYLEILRLSDNRLTGEIPHSFGDLTRLMELQLGGNLLSENIPVELGKLTSLQISLNISHNNLSGTIPDSLGNLQMLEILYLNDNKLSGEIPASIGNLMSLLICNISNNNLVGTVPDTAVFQRMDSSNFAGNHGLCNSQRSHCQPLVPHSDSKLNWLINGSQRQKILTITCIVIGSVFLITFLGLCWTIKRREPAFVALEDQTKPDVMDSYYFPKKGFTYQGLVDATRNFSEDVVLGRGACGTVYKAEMSGGEVIAVKKLNSRGEGASSDNSFRAEISTLGKIRHRNIVKLYGFCYHQNSNLLLYEYMSKGSLGEQLQRGEKNCLLDWNARYRIALGAAEGLCYLHHDCRPQIVHRDIKSNNILLDERFQAHVGDFGLAKLIDLSYSKSMSAVAGSYGYIAPEYAYTMKVTEKCDIYSFGVVLLELITGKPPVQPLEQGGDLVNWVRRSIRNMIPTIEMFDARLDTNDKRTVHEMSLVLKIALFCTSNSPASRPTMREVVAMITEARGSSSLSSSSITSETPLEEANSSKEI.

An N-terminal signal peptide occupies residues 1–23 (MRGRICFLAIVILCSFSFILVRS). The Extracellular portion of the chain corresponds to 24–734 (LNEEGRVLLE…WLINGSQRQK (711 aa)). N-linked (GlcNAc...) asparagine glycosylation is found at Asn39, Asn57, Asn78, and Asn97. LRR repeat units follow at residues 66–90 (LRTV…ICKL), 91–115 (HGLR…SLCR), 117–137 (LEVL…QLTM), 138–162 (IITL…IGNL), 163–186 (SSLQ…MAKL), 188–210 (QLRI…ISGC), 211–234 (ESLK…LEKL), 235–258 (QNLT…VGNI), 260–282 (RLEV…IGKL), 283–306 (TKMK…IGNL), 308–329 (DAAE…EFGH), 330–354 (ILNL…LGEL), 355–379 (TLLE…QFLP), 381–402 (LVDL…IGFY), 403–426 (SNFS…FCRF), 427–450 (QTLI…LKTC), 451–474 (KSLT…LFNL), 476–498 (NLTA…LGKL), 499–522 (KNLE…IGNL), 524–546 (KIVG…LGSC), 548–569 (TIQR…ELGQ), 570–593 (LVYL…SFGD), 595–618 (TRLM…LGKL), 619–643 (TSLQ…LGNL), 644–667 (QMLE…IGNL), and 669–692 (SLLI…VFQR). Residues Asn161 and Asn174 are each glycosylated (N-linked (GlcNAc...) asparagine). N-linked (GlcNAc...) asparagine glycosylation is found at Asn236 and Asn257. N-linked (GlcNAc...) asparagine glycosylation occurs at Asn368. N-linked (GlcNAc...) asparagine glycosylation is present at Asn404. 5 N-linked (GlcNAc...) asparagine glycosylation sites follow: Asn476, Asn490, Asn510, Asn521, and Asn529. 2 N-linked (GlcNAc...) asparagine glycosylation sites follow: Asn626 and Asn631. 2 N-linked (GlcNAc...) asparagine glycosylation sites follow: Asn674 and Asn728. A helical membrane pass occupies residues 735-755 (ILTITCIVIGSVFLITFLGLC). At 756-1101 (WTIKRREPAF…LEEANSSKEI (346 aa)) the chain is on the cytoplasmic side. A phosphothreonine mark is found at Thr788 and Thr796. In terms of domain architecture, Protein kinase spans 799–1081 (FSEDVVLGRG…ITEARGSSSL (283 aa)). ATP is bound by residues 805–813 (LGRGACGTV) and Lys827. 2 positions are modified to phosphotyrosine: Tyr874 and Tyr913. The active-site Proton acceptor is Asp926. A Phosphoserine modification is found at Ser960. A phosphotyrosine mark is found at Tyr968 and Tyr975. Thr976 is subject to Phosphothreonine. The segment at 1076–1101 (RGSSSLSSSSITSETPLEEANSSKEI) is disordered. Positions 1078–1088 (SSSLSSSSITS) are enriched in low complexity.

This sequence belongs to the protein kinase superfamily. Ser/Thr protein kinase family.

It localises to the cell membrane. It catalyses the reaction L-seryl-[protein] + ATP = O-phospho-L-seryl-[protein] + ADP + H(+). The enzyme catalyses L-threonyl-[protein] + ATP = O-phospho-L-threonyl-[protein] + ADP + H(+). The chain is Leucine-rich repeat receptor-like serine/threonine-protein kinase At1g17230 from Arabidopsis thaliana (Mouse-ear cress).